We begin with the raw amino-acid sequence, 268 residues long: MGSAKSVPVTPARPPPHNKHLARVADPRSPSAGILRTPIQVESSPQPGLPAGEQLEGLKHAQDSDPRSPTLGIARTPMKTSSGDPPSPLVKQLSEVFETEDSKSNLPPEPVLPPEAPLSSELDLPLGTQLSVEEQMPPWNQTEFPSKQVFSKEEARQPTETPVASQSSDKPSRDPETPRSSGSMRNRWKPNSSKVLGRSPLTILQDDNSPGTLTLRQGKRPSPLSENVSELKEGAILGTGRLLKTGGRAWEQGQDHDKENQHFPLVES.

Disordered regions lie at residues 1–232 and 247–268; these read MGSA…SELK and GRAW…LVES. 2 positions are modified to phosphoserine: serine 29 and serine 31. Threonine 37 is subject to Phosphothreonine. A phosphoserine mark is found at serine 44, serine 64, and serine 68. Over residues 56 to 66 the composition is skewed to basic and acidic residues; it reads EGLKHAQDSDP. Phosphothreonine is present on threonine 76. Residues serine 87 and serine 94 each carry the phosphoserine modification. Positions 91 to 120 are F-box-like; sequence KQLSEVFETEDSKSNLPPEPVLPPEAPLSS. A compositionally biased stretch (pro residues) spans 107 to 116; sequence PPEPVLPPEA. Positions 117-126 are enriched in low complexity; sequence PLSSELDLPL. 3 stretches are compositionally biased toward polar residues: residues 128–149, 158–169, and 178–194; these read TQLS…SKQV, PTETPVASQSSD, and PRSS…NSSK. Phosphoserine is present on serine 199. A Phosphothreonine modification is found at threonine 202. Residues 205–215 show a composition bias toward polar residues; the sequence is QDDNSPGTLTL. The residue at position 209 (serine 209) is a Phosphoserine. At threonine 212 the chain carries Phosphothreonine. The KEN box signature appears at 258-260; the sequence is KEN.

Interacts with SKP1. Part of a SCF (SKP1-cullin-F-box) protein ligase complex. In terms of processing, ubiquitinated and degraded by the APC/C-Cdh1 complex.

It is found in the cytoplasm. It localises to the cytosol. The protein operates within protein modification; protein ubiquitination. Its function is as follows. F-box-like protein which is required for entry into mitosis. Acts by participating in E3 ligase complexes that mediate the ubiquitination and degradation of WEE1 kinase at G2/M phase. This Homo sapiens (Human) protein is Cell division cycle-associated protein 3 (CDCA3).